The following is a 249-amino-acid chain: 2,3-bisphosphoglycerate-dependent phosphoglycerate mutase (249 aa).

Residues 8 to 15 (RHGESQWN), 21 to 22 (TG), arginine 60, 87 to 90 (ERHY), lysine 98, 114 to 115 (RR), and 183 to 184 (GN) each bind substrate. Histidine 9 (tele-phosphohistidine intermediate) is an active-site residue. Glutamate 87 serves as the catalytic Proton donor/acceptor.

Belongs to the phosphoglycerate mutase family. BPG-dependent PGAM subfamily.

It carries out the reaction (2R)-2-phosphoglycerate = (2R)-3-phosphoglycerate. It functions in the pathway carbohydrate degradation; glycolysis; pyruvate from D-glyceraldehyde 3-phosphate: step 3/5. In terms of biological role, catalyzes the interconversion of 2-phosphoglycerate and 3-phosphoglycerate. The sequence is that of 2,3-bisphosphoglycerate-dependent phosphoglycerate mutase from Pelodictyon phaeoclathratiforme (strain DSM 5477 / BU-1).